The sequence spans 673 residues: Estrogen receptor beta (673 aa).

The modulating stretch occupies residues 1–181 (MASSPGLDPH…SAVGKADMHF (181 aa)). 2 NR C4-type zinc fingers span residues 182–202 (CAVC…CEGC) and 218–242 (CPAT…LRKC). Residues 182 to 247 (CAVCHDYASG…RLRKCYEVGM (66 aa)) constitute a DNA-binding region (nuclear receptor). Residues 316–552 (SPEEFISRIM…DLLLEMLDAN (237 aa)) enclose the NR LBD domain. A disordered region spans residues 553-602 (TSSGGSQPSSSPSSETYSDQHQYPQPPSHLHPGSEQTTADHAIVPPLGPT). The span at 554–566 (SSGGSQPSSSPSS) shows a compositional bias: low complexity.

This sequence belongs to the nuclear hormone receptor family. NR3 subfamily. Binds DNA as a homodimer. Can form a heterodimer with ER-alpha. In terms of tissue distribution, abundant in the liver and testes, less abundant in the ovary and barely detectable in the muscle.

The protein localises to the nucleus. In terms of biological role, binds estrogens with an affinity similar to that of ER-alpha, and activates expression of reporter genes containing estrogen response elements (ERE) in an estrogen-dependent manner. The protein is Estrogen receptor beta (esr2) of Micropogonias undulatus (Atlantic croaker).